The sequence spans 975 residues: Aminopeptidase N (975 aa).

The Cytoplasmic segment spans residues 1–11 (MAKGFYISKAL). Residues 12–32 (GILAIVLGIAAVSTIIALSVV) form a helical; Signal-anchor for type II membrane protein membrane-spanning segment. The interval 33–74 (YAQEKNKNAESSPVSSPVSSPVSSPVSPTNPSTTAATTLAQS) is cytosolic Ser/Thr-rich junction. Topologically, residues 33–975 (YAQEKNKNAE…VLQWFRENSQ (943 aa)) are extracellular. The segment at 41-68 (AESSPVSSPVSSPVSSPVSPTNPSTTAA) is disordered. Residues 43–59 (SSPVSSPVSSPVSSPVS) are compositionally biased toward low complexity. The segment at 75 to 975 (KPWNHYRLPK…VLQWFRENSQ (901 aa)) is metalloprotease. Asn-134 is a glycosylation site (N-linked (GlcNAc...) asparagine). Tyr-182 carries the sulfotyrosine modification. Residues Asn-240 and Asn-271 are each glycosylated (N-linked (GlcNAc...) asparagine). 358-362 (GAMEN) lines the substrate pocket. His-394 provides a ligand contact to Zn(2+). Glu-395 serves as the catalytic Proton acceptor. Zn(2+) contacts are provided by His-398 and Glu-417. A sulfotyrosine mark is found at Tyr-425 and Tyr-430. Residues Asn-533, Asn-580, Asn-633, Asn-689, and Asn-747 are each glycosylated (N-linked (GlcNAc...) asparagine). Intrachain disulfides connect Cys-769–Cys-776 and Cys-806–Cys-842. Asn-826 carries an N-linked (GlcNAc...) asparagine glycan.

Belongs to the peptidase M1 family. (Microbial infection) Interacts with CCoV spike glycoprotein. In terms of assembly, homodimer. Interacts with SLC6A19. It depends on Zn(2+) as a cofactor. Sulfated. Post-translationally, N- and O-glycosylated. In terms of processing, may undergo proteolysis and give rise to a soluble form.

It is found in the cell membrane. It carries out the reaction Release of an N-terminal amino acid, Xaa-|-Yaa- from a peptide, amide or arylamide. Xaa is preferably Ala, but may be most amino acids including Pro (slow action). When a terminal hydrophobic residue is followed by a prolyl residue, the two may be released as an intact Xaa-Pro dipeptide.. Its function is as follows. Broad specificity aminopeptidase which plays a role in the final digestion of peptides generated from hydrolysis of proteins by gastric and pancreatic proteases. Also involved in the processing of various peptides including peptide hormones, such as angiotensin III and IV, neuropeptides, and chemokines. May also be involved the cleavage of peptides bound to major histocompatibility complex class II molecules of antigen presenting cells. May have a role in angiogenesis and promote cholesterol crystallization. May have a role in amino acid transport by acting as binding partner of amino acid transporter SLC6A19 and regulating its activity. In terms of biological role, (Microbial infection) Probable receptor for canine coronavirus (CCoV). This Canis lupus familiaris (Dog) protein is Aminopeptidase N (ANPEP).